A 125-amino-acid polypeptide reads, in one-letter code: Interleukin-6 (125 aa).

A disulfide bond links Cys-16 and Cys-26.

This sequence belongs to the IL-6 superfamily. Component of a hexamer of two molecules each of IL6, IL6R and IL6ST; first binds to IL6R to associate with the signaling subunit IL6ST. Interacts with IL6R (via the N-terminal ectodomain); this interaction may be affected by IL6R-binding with SORL1, hence decreasing IL6 cis signaling. Interacts with SORL1 (via the N-terminal ectodomain); this interaction leads to IL6 internalization and lysosomal degradation. May form a trimeric complex with the soluble SORL1 ectodomain and soluble IL6R receptor; this interaction might stabilize circulating IL6, hence promoting IL6 trans signaling.

It is found in the secreted. In terms of biological role, cytokine with a wide variety of biological functions in immunity, tissue regeneration, and metabolism. Binds to IL6R, then the complex associates to the signaling subunit IL6ST/gp130 to trigger the intracellular IL6-signaling pathway. The interaction with the membrane-bound IL6R and IL6ST stimulates 'classic signaling', whereas the binding of IL6 and soluble IL6R to IL6ST stimulates 'trans-signaling'. Alternatively, 'cluster signaling' occurs when membrane-bound IL6:IL6R complexes on transmitter cells activate IL6ST receptors on neighboring receiver cells. Functionally, IL6 is a potent inducer of the acute phase response. Rapid production of IL6 contributes to host defense during infection and tissue injury, but excessive IL6 synthesis is involved in disease pathology. In the innate immune response, is synthesized by myeloid cells, such as macrophages and dendritic cells, upon recognition of pathogens through toll-like receptors (TLRs) at the site of infection or tissue injury. In the adaptive immune response, is required for the differentiation of B cells into immunoglobulin-secreting cells. Plays a major role in the differentiation of CD4(+) T cell subsets. Essential factor for the development of T follicular helper (Tfh) cells that are required for the induction of germinal-center formation. Required to drive naive CD4(+) T cells to the Th17 lineage. Also required for proliferation of myeloma cells and the survival of plasmablast cells. Acts as an essential factor in bone homeostasis and on vessels directly or indirectly by induction of VEGF, resulting in increased angiogenesis activity and vascular permeability. Induces, through 'trans-signaling' and synergistically with IL1B and TNF, the production of VEGF. Involved in metabolic controls, is discharged into the bloodstream after muscle contraction increasing lipolysis and improving insulin resistance. 'Trans-signaling' in central nervous system also regulates energy and glucose homeostasis. Mediates, through GLP-1, crosstalk between insulin-sensitive tissues, intestinal L cells and pancreatic islets to adapt to changes in insulin demand. Also acts as a myokine. Plays a protective role during liver injury, being required for maintenance of tissue regeneration. Also has a pivotal role in iron metabolism by regulating HAMP/hepcidin expression upon inflammation or bacterial infection. Through activation of IL6ST-YAP-NOTCH pathway, induces inflammation-induced epithelial regeneration. This chain is Interleukin-6 (IL6), found in Neovison vison (American mink).